The following is a 176-amino-acid chain: MADVNHVVLVGRLTRDAELKYTSAGGALCRFSVAINRRRKSGDDWVEEVNFFDIVLWGRQGEVISQYLIKGKQVAVEGELRQSRWEQEGQSRSKVEISATNVQLLGSVLGGAARAEDGEFSSSRVAAESTAGRVRGTSSDSRSPTGDILGEKRGLDATSSLDEADFSSSDLDTVPF.

An SSB domain is found at 4–106; the sequence is VNHVVLVGRL…ISATNVQLLG (103 aa). Residues 118–176 form a disordered region; that stretch reads GEFSSSRVAAESTAGRVRGTSSDSRSPTGDILGEKRGLDATSSLDEADFSSSDLDTVPF. Residues 157–176 are compositionally biased toward polar residues; the sequence is ATSSLDEADFSSSDLDTVPF.

As to quaternary structure, homotetramer.

The sequence is that of Single-stranded DNA-binding protein (ssb) from Treponema pallidum (strain Nichols).